The sequence spans 163 residues: 3-hydroxyacyl-[acyl-carrier-protein] dehydratase FabZ (163 aa).

Residue His61 is part of the active site.

It belongs to the thioester dehydratase family. FabZ subfamily.

The protein resides in the cytoplasm. It catalyses the reaction a (3R)-hydroxyacyl-[ACP] = a (2E)-enoyl-[ACP] + H2O. Functionally, involved in unsaturated fatty acids biosynthesis. Catalyzes the dehydration of short chain beta-hydroxyacyl-ACPs and long chain saturated and unsaturated beta-hydroxyacyl-ACPs. This Dinoroseobacter shibae (strain DSM 16493 / NCIMB 14021 / DFL 12) protein is 3-hydroxyacyl-[acyl-carrier-protein] dehydratase FabZ.